A 144-amino-acid polypeptide reads, in one-letter code: Bacilliredoxin BT9727_3899 (144 aa).

This sequence belongs to the bacilliredoxin family.

The polypeptide is Bacilliredoxin BT9727_3899 (Bacillus thuringiensis subsp. konkukian (strain 97-27)).